An 89-amino-acid chain; its full sequence is Large ribosomal subunit protein bL27 (89 aa).

This sequence belongs to the bacterial ribosomal protein bL27 family.

The polypeptide is Large ribosomal subunit protein bL27 (Afipia carboxidovorans (strain ATCC 49405 / DSM 1227 / KCTC 32145 / OM5) (Oligotropha carboxidovorans)).